A 261-amino-acid polypeptide reads, in one-letter code: Small ribosomal subunit protein uS2 (261 aa).

At Ser2 the chain carries N-acetylserine. The tract at residues 215–261 (AEEAKTTEDVEEAAPVDADEWTGETEEVDWAESGATPAVEDAAASNW) is disordered. The segment covering 223-244 (DVEEAAPVDADEWTGETEEVDW) has biased composition (acidic residues).

Belongs to the universal ribosomal protein uS2 family. Component of the small ribosomal subunit. Mature ribosomes consist of a small (40S) and a large (60S) subunit. The 40S subunit contains about 33 different proteins and 1 molecule of RNA (18S). The 60S subunit contains about 49 different proteins and 3 molecules of RNA (25S, 5.8S and 5S). Interacts with RPS21.

Its subcellular location is the cytoplasm. Its function is as follows. Required for the assembly and/or stability of the 40S ribosomal subunit. Required for the processing of the 20S rRNA-precursor to mature 18S rRNA in a late step of the maturation of 40S ribosomal subunits. This Scheffersomyces stipitis (strain ATCC 58785 / CBS 6054 / NBRC 10063 / NRRL Y-11545) (Yeast) protein is Small ribosomal subunit protein uS2.